The following is a 692-amino-acid chain: Elongation factor G (692 aa).

The tr-type G domain occupies 8–282 (ERTRNIGIMA…AIVDYLPAPT (275 aa)). Residues 17 to 24 (AHIDAGKT), 81 to 85 (DTPGH), and 135 to 138 (NKMD) contribute to the GTP site.

The protein belongs to the TRAFAC class translation factor GTPase superfamily. Classic translation factor GTPase family. EF-G/EF-2 subfamily.

Its subcellular location is the cytoplasm. Catalyzes the GTP-dependent ribosomal translocation step during translation elongation. During this step, the ribosome changes from the pre-translocational (PRE) to the post-translocational (POST) state as the newly formed A-site-bound peptidyl-tRNA and P-site-bound deacylated tRNA move to the P and E sites, respectively. Catalyzes the coordinated movement of the two tRNA molecules, the mRNA and conformational changes in the ribosome. The sequence is that of Elongation factor G from Desulforamulus reducens (strain ATCC BAA-1160 / DSM 100696 / MI-1) (Desulfotomaculum reducens).